Here is a 488-residue protein sequence, read N- to C-terminus: Aerolysin (488 aa).

A signal peptide spans 1–24; that stretch reads MMNRIITANLAFLASSLMLAQVQA. Intrachain disulfides connect C43-C99 and C183-C188. Residues 69 to 85 are interaction with host N-linked glycan; it reads WQITGLADRWVIMGPGY. The interval 256–288 is part of the transmembrane beta-barrel after proteolytic activation of the toxin and insertion into the host membrane; the sequence is YSLSEKVTTKNKFQWPLVGETELAIEIAASQSW. The segment at 346-355 is interaction with glycans from host GPI-anchor; sequence RWGGNAWYTH. A propeptide spanning residues 444 to 488 is cleaved from the precursor; sequence TRSAKAAQLRSASAEEVALTSVDLDSEALANEGFGNVSLTIVPVQ.

It belongs to the aerolysin family. In terms of assembly, homodimer in solution; homoheptamer in the host membrane. After binding to GPI-anchored proteins in target membranes and proteolytic removal of the C-terminal propeptide, the protein assembles into a heptameric pre-pore complex. A further conformation change leads to insertion into the host membrane. Post-translationally, proteolytic cleavage and subsequent release of the propeptide trigger a major conformation change, leading to the formation of a heptameric pre-pore that then inserts into the host membrane.

The protein localises to the secreted. It localises to the host cell membrane. Functionally, secreted, cytolytic toxin that forms pores in host membranes after proteolytic removal of a C-terminal propeptide, leading to destruction of the membrane permeability barrier and cell death. The pores are formed by transmembrane beta-strands and are approximately 3 nm in diameter. The protein is Aerolysin (asa1) of Aeromonas sobria.